The sequence spans 562 residues: MPRALRRVPGSRVMLRVGVVVAVLALVAALANLAVPRPARAAGGGYWHTSGREILDANNVPVRIAGINWFGFETCNYVVHGLWSRDYRSMLDQIKSLGYNTIRLPYSDDILKPGTMPNSINFYQMNQDLQGLTSLQVMDKIVAYAGQIGLRIILDRHRPDCSGQSALWYTSSVSEATWISDLQALAQRYKGNPTVVGFDLHNEPHDPACWGCGDPSIDWRLAAERAGNAVLSVNPNLLIFVEGVQSYNGDSYWWGGNLQGAGQYPVVLNVPNRLVYSAHDYATSVYPQTWFSDPTFPNNMPGIWNKNWGYLFNQNIAPVWLGEFGTTLQSTTDQTWLKTLVQYLRPTAQYGADSFQWTFWSWNPDSGDTGGILKDDWQTVDTVKDGYLAPIKSSIFDPVGASASPSSQPSPSVSPSPSPSPSASRTPTPTPTPTASPTPTLTPTATPTPTASPTPSPTAASGARCTASYQVNSDWGNGFTVTVAVTNSGSVATKTWTVSWTFGGNQTITNSWNAAVTQNGQSVTARNMSYNNVIQPGQNTTFGFQASYTGSNAAPTVACAAS.

Residues 1–41 (MPRALRRVPGSRVMLRVGVVVAVLALVAALANLAVPRPARA) form the signal peptide. Positions 42-400 (AGGGYWHTSG…IKSSIFDPVG (359 aa)) are catalytic. C75 and C161 form a disulfide bridge. The Proton donor role is filled by E203. C209 and C212 are joined by a disulfide. E323 serves as the catalytic Nucleophile. A disordered region spans residues 399–462 (VGASASPSSQ…PTPSPTAASG (64 aa)). Composition is skewed to low complexity over residues 401–411 (ASASPSSQPSP) and 437–449 (PTPT…TPTP). Residues 458–562 (TAASGARCTA…AAPTVACAAS (105 aa)) enclose the CBM2 domain.

Belongs to the glycosyl hydrolase 5 (cellulase A) family.

The catalysed reaction is Endohydrolysis of (1-&gt;4)-beta-D-glucosidic linkages in cellulose, lichenin and cereal beta-D-glucans.. Functionally, has a very high specific activity on carboxymethylcellulose. The chain is Endoglucanase E1 from Acidothermus cellulolyticus (strain ATCC 43068 / DSM 8971 / 11B).